A 669-amino-acid polypeptide reads, in one-letter code: DNA ligase (669 aa).

NAD(+) contacts are provided by residues D33–D37, S82–L83, and E114. K116 (N6-AMP-lysine intermediate) is an active-site residue. Positions 137, 174, 291, and 315 each coordinate NAD(+). Zn(2+) is bound by residues C409, C412, C427, and C433. Residues E593–L669 form the BRCT domain.

The protein belongs to the NAD-dependent DNA ligase family. LigA subfamily. It depends on Mg(2+) as a cofactor. Mn(2+) is required as a cofactor.

The enzyme catalyses NAD(+) + (deoxyribonucleotide)n-3'-hydroxyl + 5'-phospho-(deoxyribonucleotide)m = (deoxyribonucleotide)n+m + AMP + beta-nicotinamide D-nucleotide.. Its function is as follows. DNA ligase that catalyzes the formation of phosphodiester linkages between 5'-phosphoryl and 3'-hydroxyl groups in double-stranded DNA using NAD as a coenzyme and as the energy source for the reaction. It is essential for DNA replication and repair of damaged DNA. This is DNA ligase from Vibrio vulnificus (strain CMCP6).